The following is a 98-amino-acid chain: Ribonuclease kappa (98 aa).

The next 2 membrane-spanning stretches (helical) occupy residues 13 to 33 (ACGI…GIFF) and 65 to 85 (VSYN…FSFC).

Belongs to the RNase K family. In terms of assembly, interacts with the proton translocation complex V0 of the V-ATPase. Interacts with ATP6AP1. In terms of tissue distribution, expressed in brain (at protein level).

The protein resides in the endomembrane system. Its subcellular location is the cytoplasmic vesicle. It localises to the clathrin-coated vesicle membrane. In terms of biological role, endoribonuclease which preferentially cleaves ApU and ApG phosphodiester bonds. Hydrolyzes UpU bonds at a lower rate. Regulates the activity of vacuolar (H+)-ATPase (V-ATPase) which is responsible for acidifying and maintaining the pH of intracellular compartments. Required at an early stage of receptor-mediated endocytosis. This is Ribonuclease kappa (RNASEK) from Bos taurus (Bovine).